The chain runs to 282 residues: Virginiamycin B lyase (282 aa).

A substrate-binding site is contributed by His-217. Glu-256 serves as a coordination point for Mg(2+). His-258 acts as the Proton acceptor in catalysis. Glu-273 provides a ligand contact to Mg(2+).

The protein belongs to the Vgb family. Monomer. Mg(2+) is required as a cofactor.

Inactivates the type B streptogramin antibiotics by linearizing the lactone ring at the ester linkage, generating a free phenylglycine carboxylate and converting the threonyl moiety into 2-amino-butenoic acid. The polypeptide is Virginiamycin B lyase (Mycolicibacterium smegmatis (strain ATCC 700084 / mc(2)155) (Mycobacterium smegmatis)).